A 655-amino-acid chain; its full sequence is RalA-binding protein 1-A (655 aa).

The tract at residues 1–153 (MTECFLPPAS…KKSKDLTAAD (153 aa)) is disordered. Residues 52–68 (DILHEPPDIVSEDEKDH) show a composition bias toward basic and acidic residues. Position 69–74 (69–74 (GKKKGK)) interacts with ATP. Composition is skewed to basic residues over residues 69 to 79 (GKKKGKFKKKE) and 102 to 118 (KIKRSKGIHVFKKPSFS). Residues 102–119 (KIKRSKGIHVFKKPSFSK) form a nuclear localization signal region. A compositionally biased stretch (basic and acidic residues) spans 119 to 150 (KKKEKDFKIKEKPKEEKHKEDKHKEKKSKDLT). 2 tandem repeats follow at residues 133–137 (EEKHK) and 138–142 (EDKHK). Residues 133 to 142 (EEKHKEDKHK) are 2 X 5 AA tandem repeats of E-[D/E]-K-H-K. The tract at residues 149-214 (LTAADVVKQW…PLVFRECIDF (66 aa)) is mediates association with membranes and could form transmembrane domains. Positions 187–383 (IPLIEAAERT…PLRWSNMATM (197 aa)) constitute a Rho-GAP domain. Residues 398–495 (RRQEFLLNCL…LTEQEELVAM (98 aa)) form a mediates interaction with RALA and RALB region. ATP is bound at residue 413 to 420 (AGVKDLSK). Positions 494-510 (AMEQYLRRQIATEKEEI) are required to maintain nuclear localization. The mediates interaction with REPS1 and REPS2 stretch occupies residues 496-655 (EQYLRRQIAT…GKKLSSETLI (160 aa)). 2 disordered regions span residues 520 to 548 (IQSRQQHGRSETEEYSSESESESEDEEEL) and 600 to 655 (LQEE…ETLI). Acidic residues predominate over residues 532–548 (EEYSSESESESEDEEEL). Residues 619–630 (NLPETKAPKDQP) are compositionally biased toward basic and acidic residues.

Interacts with the active, GTP-bound form of ralB and ralA.

It localises to the cell membrane. The protein localises to the cytoplasm. Its subcellular location is the cytosol. The protein resides in the cytoskeleton. It is found in the spindle pole. It localises to the nucleus. The protein localises to the mitochondrion. Its subcellular location is the cell projection. The protein resides in the lamellipodium. It catalyses the reaction an S-substituted glutathione(in) + ATP + H2O = an S-substituted glutathione(out) + ADP + phosphate + H(+). It carries out the reaction ATP + H2O + xenobioticSide 1 = ADP + phosphate + xenobioticSide 2.. The enzyme catalyses leukotriene C4(in) + ATP + H2O = leukotriene C4(out) + ADP + phosphate + H(+). Functionally, multifunctional protein that functions as a downstream effector of ralA and ralB. As a GTPase-activating protein/GAP can inactivate CDC42 and RAC1 by stimulating their GTPase activity. As part of the Ral signaling pathway, may also regulate ligand-dependent EGF and insulin receptors-mediated endocytosis. During mitosis, may act as a scaffold protein in the phosphorylation of EPSIN/EPN1 by the mitotic kinase cyclin B-CDK1, preventing endocytosis during that phase of the cell cycle. During mitosis, also controls mitochondrial fission as an effector of ralA. Recruited to mitochondrion by ralA, acts as a scaffold to foster the mitotic kinase cyclin B-CDK1-mediated phosphorylation and activation of DNM1L. Acts on the cytoskeleton, to regulate pigment distribution and to regulate gastrulation. Could also function as a primary ATP-dependent active transporter for glutathione conjugates of electrophiles. May also actively catalyze the efflux of a wide range of substrates including xenobiotics like doxorubicin (DOX) contributing to cell multidrug resistance. The polypeptide is RalA-binding protein 1-A (ralbp1-a) (Xenopus laevis (African clawed frog)).